Here is a 135-residue protein sequence, read N- to C-terminus: Large ribosomal subunit protein mL54 (135 aa).

It belongs to the mitochondrion-specific ribosomal protein mL54 family. In terms of assembly, component of the mitochondrial ribosome large subunit (39S) which comprises a 16S rRNA and about 50 distinct proteins.

It is found in the mitochondrion. The sequence is that of Large ribosomal subunit protein mL54 (mrpl54) from Danio rerio (Zebrafish).